The primary structure comprises 76 residues: UPF0352 protein ECA2748 (76 aa).

Belongs to the UPF0352 family.

This chain is UPF0352 protein ECA2748, found in Pectobacterium atrosepticum (strain SCRI 1043 / ATCC BAA-672) (Erwinia carotovora subsp. atroseptica).